A 546-amino-acid polypeptide reads, in one-letter code: 2-succinyl-5-enolpyruvyl-6-hydroxy-3-cyclohexene-1-carboxylate synthase (546 aa).

The protein belongs to the TPP enzyme family. MenD subfamily. As to quaternary structure, homodimer. Mg(2+) serves as cofactor. Mn(2+) is required as a cofactor. Requires thiamine diphosphate as cofactor.

The catalysed reaction is isochorismate + 2-oxoglutarate + H(+) = 5-enolpyruvoyl-6-hydroxy-2-succinyl-cyclohex-3-ene-1-carboxylate + CO2. It functions in the pathway quinol/quinone metabolism; 1,4-dihydroxy-2-naphthoate biosynthesis; 1,4-dihydroxy-2-naphthoate from chorismate: step 2/7. The protein operates within quinol/quinone metabolism; menaquinone biosynthesis. In terms of biological role, catalyzes the thiamine diphosphate-dependent decarboxylation of 2-oxoglutarate and the subsequent addition of the resulting succinic semialdehyde-thiamine pyrophosphate anion to isochorismate to yield 2-succinyl-5-enolpyruvyl-6-hydroxy-3-cyclohexene-1-carboxylate (SEPHCHC). The sequence is that of 2-succinyl-5-enolpyruvyl-6-hydroxy-3-cyclohexene-1-carboxylate synthase from Mycolicibacterium smegmatis (strain ATCC 700084 / mc(2)155) (Mycobacterium smegmatis).